The chain runs to 86 residues: Haditoxin (86 aa).

The first 21 residues, M1–T21, serve as a signal peptide directing secretion. Disulfide bonds link C24–C45, C38–C62, C66–C78, and C79–C84.

This sequence belongs to the three-finger toxin family. Short-chain subfamily. Orphan group VIII (haditoxin) sub-subfamily. In terms of assembly, homodimer; non-covalently linked. In terms of tissue distribution, expressed by the venom gland.

It localises to the secreted. In terms of biological role, antagonist of muscle (alpha-1-beta-1-delta-epsilon/CHRNA1-CHRNB1-CHRND-CHRNE) and neuronal (alpha-7/CHRNA7, alpha-3-beta-2/CHRNA3-CHRNB2, alpha-4-beta-2/CHRNA4-CHRNB2) nicotinic acetylcholine receptors (nAChR). The highest affinity is for human alpha-7/CHRNA7 nAChRs (IC(50)=180 nM), compared to human alpha-1-beta-1-delta-epsilon/CHRNA1-CHRNB1-CHRND-CHRNE nAChR (IC(50)= 550 nM), alpha-3-beta-2/CHRNA3-CHRNB2 nAChR (IC(50)=500 nM), and alpha-4-beta-2/CHRNA4-CHRNB2 nAChR (IC(50)=2.6 uM). This chain is Haditoxin, found in Ophiophagus hannah (King cobra).